Reading from the N-terminus, the 182-residue chain is Small ribosomal subunit protein uS4c (182 aa).

The tract at residues 8-36 (LGALPGLTSKRPGSGSDPKNKSRSGKRSQ) is disordered. In terms of domain architecture, S4 RNA-binding spans 82–143 (MRLDNILFRL…KQRSKALIQN (62 aa)).

This sequence belongs to the universal ribosomal protein uS4 family. Part of the 30S ribosomal subunit. Contacts protein S5. The interaction surface between S4 and S5 is involved in control of translational fidelity.

It is found in the plastid. Its subcellular location is the chloroplast. In terms of biological role, one of the primary rRNA binding proteins, it binds directly to 16S rRNA where it nucleates assembly of the body of the 30S subunit. Its function is as follows. With S5 and S12 plays an important role in translational accuracy. The protein is Small ribosomal subunit protein uS4c (rps4) of Dietes robinsoniana (Lord Howe wedding lily).